Reading from the N-terminus, the 248-residue chain is Ubiquinone biosynthesis O-methyltransferase (248 aa).

Residues R41, G72, D93, and M136 each contribute to the S-adenosyl-L-methionine site.

The protein belongs to the methyltransferase superfamily. UbiG/COQ3 family.

It carries out the reaction a 3-demethylubiquinol + S-adenosyl-L-methionine = a ubiquinol + S-adenosyl-L-homocysteine + H(+). It catalyses the reaction a 3-(all-trans-polyprenyl)benzene-1,2-diol + S-adenosyl-L-methionine = a 2-methoxy-6-(all-trans-polyprenyl)phenol + S-adenosyl-L-homocysteine + H(+). It functions in the pathway cofactor biosynthesis; ubiquinone biosynthesis. O-methyltransferase that catalyzes the 2 O-methylation steps in the ubiquinone biosynthetic pathway. In Bartonella bacilliformis (strain ATCC 35685 / KC583 / Herrer 020/F12,63), this protein is Ubiquinone biosynthesis O-methyltransferase.